A 595-amino-acid polypeptide reads, in one-letter code: Putative capsid protein V20 (595 aa).

The protein localises to the virion. Its function is as follows. May self assemble to form an icosahedral capsid. Most abundant protein in the virion. This is Putative capsid protein V20 from Sputnik virophage.